Consider the following 697-residue polypeptide: Probable potassium transporter 4 (697 aa).

Residues 1–29 are Cytoplasmic-facing; sequence MSSSHTVTVSMDVEAGQKNKDKKGISQDL. A helical transmembrane segment spans residues 30-50; it reads ILAYKTLGVVFGGLVTSPLYV. Topologically, residues 51–66 are extracellular; the sequence is YPSMNLTNPTEEDYLG. Asparagine 55 carries an N-linked (GlcNAc...) asparagine glycan. The chain crosses the membrane as a helical span at residues 67–87; it reads IYSIMFWTLTLIGVVKYICIA. Residues 88 to 152 lie on the Cytoplasmic side of the membrane; that stretch reads LNADDHGEGG…FIESSIIARR (65 aa). Residues 153 to 173 form a helical membrane-spanning segment; it reads LLLLTAILGMCMLIGDGILTP. The Extracellular portion of the chain corresponds to 174-189; that stretch reads AISVLSAIDGLRGPFP. A helical transmembrane segment spans residues 190–210; it reads SVSKPAVEGLSAAILVGLFLL. The Cytoplasmic segment spans residues 211–217; sequence QKYGTSK. The helical transmembrane segment at 218 to 238 threads the bilayer; sequence VSFMFSPIMAAWTFATPVIGV. The Extracellular portion of the chain corresponds to 239–271; sequence YSIWRYYPGIFKAMSPHYIVRFFMTNQTRGWQL. Asparagine 264 carries N-linked (GlcNAc...) asparagine glycosylation. The helical transmembrane segment at 272–292 threads the bilayer; sequence LGGTVLCITGAEAMFADLGHF. Topologically, residues 293–300 are cytoplasmic; sequence SKRSIQIA. The chain crosses the membrane as a helical span at residues 301–321; that stretch reads FMSSIYPSLVLTYAGQTAYLI. Residues 322 to 338 lie on the Extracellular side of the membrane; that stretch reads NNVDDFSDGFYKFVPRP. The helical transmembrane segment at 339 to 359 threads the bilayer; sequence VYWPMFIIATLAAIVASQSLI. Topologically, residues 360-390 are cytoplasmic; the sequence is SATFSVIKQSVVLDYFPRVKVVHTSKDKEGE. The chain crosses the membrane as a helical span at residues 391–411; that stretch reads VYSPETNYMLMLLCVGVILGF. The Extracellular segment spans residues 412-422; the sequence is GDGKDIGNAFG. A helical membrane pass occupies residues 423-443; sequence VVVILVMLITTILLTLVMLII. Topologically, residues 444–447 are cytoplasmic; sequence WGTH. A helical membrane pass occupies residues 448–468; the sequence is VVLVALYLVPFLLLEATYVSA. Topologically, residues 469–475 are extracellular; it reads VCTKILR. The chain crosses the membrane as a helical span at residues 476–496; it reads GGWVPFAVSVALAAVMFGWYY. The Cytoplasmic portion of the chain corresponds to 497–697; it reads GRQRKTEYEA…RVEIGMLYKA (201 aa).

Belongs to the HAK/KUP transporter (TC 2.A.72.3) family.

The protein localises to the membrane. Its function is as follows. High-affinity potassium transporter. In Oryza sativa subsp. japonica (Rice), this protein is Probable potassium transporter 4 (HAK4).